Consider the following 276-residue polypeptide: Beta-lactamase OXA-1 (276 aa).

The N-terminal stretch at 1–25 (MKNTIHINFAIFLIIANIIYSSASA) is a signal peptide. The active-site Acyl-ester intermediate is Ser-71. A beta-lactam-binding residues include Ser-71, Lys-74, Ser-118, Thr-216, and Ala-218. Lys-74 carries the post-translational modification N6-carboxylysine.

The protein belongs to the class-D beta-lactamase family. As to quaternary structure, monomer.

The protein resides in the periplasm. The catalysed reaction is a beta-lactam + H2O = a substituted beta-amino acid. With respect to regulation, inhibited by penicillin sulfones. Only weakly inhibited by clavulanic acid and sulbactam. Functionally, class D beta-lactamase which confers resistance to the beta-lactam antibiotics, including amoxicillin and ticarcillin. Acts via hydrolysis of the beta-lactam ring. Has penicillin- and cephalosporin-hydrolyzing activities. The sequence is that of Beta-lactamase OXA-1 from Escherichia coli.